Reading from the N-terminus, the 372-residue chain is GDP-mannose 4,6 dehydratase (372 aa).

The tract at residues 1-20 (MAHAPARCPSARGSGDGEMG) is disordered. Residue A2 is modified to N-acetylalanine. NADP(+)-binding positions include 30-35 (GITGQD), 55-58 (RRSS), 86-87 (DL), 108-112 (LGAQS), and Y123. The active site involves T155. Catalysis depends on nucleophile residues E157 and Y179. Residues K183, H209, and R214 each coordinate NADP(+). Y323 bears the Phosphotyrosine mark.

Belongs to the NAD(P)-dependent epimerase/dehydratase family. GDP-mannose 4,6-dehydratase subfamily. Requires NADP(+) as cofactor. Highly expressed in pancreas and small intestine. Expressed in thymus, protstate, colon, heart, placenta, liver and kidney. Expressed at low levels in spleen, testis, brain and lung.

It carries out the reaction GDP-alpha-D-mannose = GDP-4-dehydro-alpha-D-rhamnose + H2O. The protein operates within nucleotide-sugar biosynthesis; GDP-L-fucose biosynthesis via de novo pathway; GDP-L-fucose from GDP-alpha-D-mannose: step 1/2. With respect to regulation, inhibited by GDP-fucose. In terms of biological role, catalyzes the conversion of GDP-D-mannose to GDP-4-dehydro-6-deoxy-D-mannose. In Homo sapiens (Human), this protein is GDP-mannose 4,6 dehydratase.